The following is a 413-amino-acid chain: N-acylneuraminate cytidylyltransferase (413 aa).

The protein belongs to the CMP-NeuNAc synthase family. It depends on Mg(2+) as a cofactor. Requires Mn(2+) as cofactor.

It localises to the cytoplasm. It catalyses the reaction an N-acylneuraminate + CTP = a CMP-N-acyl-beta-neuraminate + diphosphate. Catalyzes the formation of CMP-N-acetylneuraminic acid (CMP-NeuNAc), which is essential for the formation of the capsule. In Streptococcus agalactiae serotype V (strain ATCC BAA-611 / 2603 V/R), this protein is N-acylneuraminate cytidylyltransferase (neuA).